A 182-amino-acid chain; its full sequence is Adenine phosphoribosyltransferase (182 aa).

Belongs to the purine/pyrimidine phosphoribosyltransferase family. As to quaternary structure, homodimer.

It localises to the cytoplasm. The enzyme catalyses AMP + diphosphate = 5-phospho-alpha-D-ribose 1-diphosphate + adenine. Its pathway is purine metabolism; AMP biosynthesis via salvage pathway; AMP from adenine: step 1/1. In terms of biological role, catalyzes a salvage reaction resulting in the formation of AMP, that is energically less costly than de novo synthesis. This is Adenine phosphoribosyltransferase from Campylobacter jejuni subsp. doylei (strain ATCC BAA-1458 / RM4099 / 269.97).